A 126-amino-acid chain; its full sequence is Glycine cleavage system H protein (126 aa).

The Lipoyl-binding domain occupies 22–104; the sequence is VAYVGITDYA…YGKGWLIKIS (83 aa). Lys63 is subject to N6-lipoyllysine.

Belongs to the GcvH family. The glycine cleavage system is composed of four proteins: P, T, L and H. The cofactor is (R)-lipoate.

Functionally, the glycine cleavage system catalyzes the degradation of glycine. The H protein shuttles the methylamine group of glycine from the P protein to the T protein. This is Glycine cleavage system H protein from Parabacteroides distasonis (strain ATCC 8503 / DSM 20701 / CIP 104284 / JCM 5825 / NCTC 11152).